Consider the following 1305-residue polypeptide: Myosin-IIIb (1305 aa).

The Protein kinase domain occupies 15-281 (WEIIETIGKG…VTHLLDHPFI (267 aa)). ATP-binding positions include 21–29 (IGKGTYGKV) and Lys44. Asp144 acts as the Proton acceptor in catalysis. The 716-residue stretch at 331-1046 (CLEDDLVNLE…HVEQLNLLLR (716 aa)) folds into the Myosin motor domain. The actin-binding stretch occupies residues 927-949 (LMDLLSKMVVGQPHFIRCIKPND). IQ domains lie at 1048–1077 (VMGR…KREK) and 1075–1104 (REKG…RRSE). 2 disordered regions span residues 1093–1164 (RKLK…VTSG) and 1200–1233 (SPCE…MLSS).

It in the C-terminal section; belongs to the TRAFAC class myosin-kinesin ATPase superfamily. Myosin family. This sequence in the N-terminal section; belongs to the protein kinase superfamily. STE Ser/Thr protein kinase family. In terms of assembly, interacts (via C-terminus) with ESPN. Interacts (via C-terminus) with ESPNL. Expressed in the cochlear hair cells (at protein level). Expressed in utricle hair bundles (at protein level).

The protein resides in the cytoplasm. It is found in the cytoskeleton. It localises to the cell projection. The protein localises to the stereocilium. The catalysed reaction is L-seryl-[protein] + ATP = O-phospho-L-seryl-[protein] + ADP + H(+). It catalyses the reaction L-threonyl-[protein] + ATP = O-phospho-L-threonyl-[protein] + ADP + H(+). Functionally, probable actin-based motor with a protein kinase activity. Required for normal cochlear hair bundle development and hearing. Plays an important role in the early steps of cochlear hair bundle morphogenesis. Influences the number and lengths of stereocilia to be produced and limits the growth of microvilli within the forming auditory hair bundles thereby contributing to the architecture of the hair bundle, including its staircase pattern. Involved in the elongation of actin in stereocilia tips by transporting the actin regulatory factor ESPN to the plus ends of actin filaments. This Mus musculus (Mouse) protein is Myosin-IIIb (Myo3b).